The following is a 159-amino-acid chain: Cytochrome c-type biogenesis protein CcmE (159 aa).

Residues 1-8 (MNLRRKNR) lie on the Cytoplasmic side of the membrane. A helical; Signal-anchor for type II membrane protein membrane pass occupies residues 9–29 (LWVVCAVLAGLALTTALVLYA). Residues 30 to 159 (LRANIDLFYT…PQRADKDTSS (130 aa)) are Periplasmic-facing. Residues 129 to 159 (KHDENYTPPEVEKAMQENHRRPQRADKDTSS) are disordered. Heme-binding residues include His130 and Tyr134.

This sequence belongs to the CcmE/CycJ family.

Its subcellular location is the cell inner membrane. Heme chaperone required for the biogenesis of c-type cytochromes. Transiently binds heme delivered by CcmC and transfers the heme to apo-cytochromes in a process facilitated by CcmF and CcmH. In Salmonella paratyphi A (strain ATCC 9150 / SARB42), this protein is Cytochrome c-type biogenesis protein CcmE.